Reading from the N-terminus, the 341-residue chain is Abnormal cell lineage protein 44 (341 aa).

The N-terminal stretch at 1–21 is a signal peptide; sequence MRALYFRTTTLSTFFILCSLA. Cystine bridges form between cysteine 84/cysteine 95, cysteine 134/cysteine 142, cysteine 144/cysteine 158, cysteine 206/cysteine 220, cysteine 208/cysteine 215, cysteine 265/cysteine 292, cysteine 275/cysteine 287, cysteine 291/cysteine 331, cysteine 307/cysteine 322, cysteine 309/cysteine 319, and cysteine 314/cysteine 315. Serine 212 carries the O-palmitoleoyl serine; by mom-1 lipid modification. Asparagine 279 is a glycosylation site (N-linked (GlcNAc...) asparagine).

This sequence belongs to the Wnt family. Palmitoleoylation is required for efficient binding to frizzled receptors. Depalmitoleoylation leads to Wnt signaling pathway inhibition.

Its subcellular location is the secreted. The protein resides in the extracellular space. It localises to the extracellular matrix. In terms of biological role, ligand for members of the frizzled family of seven transmembrane receptors. Affects male tail development, vulval precursor cell specification and egg laying. Involved in morphogenesis by influencing polarity of asymmetric cell divisions of the B, U, and F cells in the male, and the T cell in males and hermaphrodites. Controls spindle orientation in B-gamma cell division during male copulatory spicule development. Involved in specification of the P7.p lineage during vulval development. Has a role in providing polarity and default lin-17 localization in axon development and positioning of neuromuscular synapses in DA9 regions by negatively regulating synaptogenesis. This Caenorhabditis briggsae protein is Abnormal cell lineage protein 44.